Consider the following 89-residue polypeptide: Small ribosomal subunit protein uS15 (89 aa).

This sequence belongs to the universal ribosomal protein uS15 family. In terms of assembly, part of the 30S ribosomal subunit. Forms a bridge to the 50S subunit in the 70S ribosome, contacting the 23S rRNA.

In terms of biological role, one of the primary rRNA binding proteins, it binds directly to 16S rRNA where it helps nucleate assembly of the platform of the 30S subunit by binding and bridging several RNA helices of the 16S rRNA. Functionally, forms an intersubunit bridge (bridge B4) with the 23S rRNA of the 50S subunit in the ribosome. This chain is Small ribosomal subunit protein uS15, found in Mycobacterium avium (strain 104).